The chain runs to 217 residues: tRNA (guanine-N(7)-)-methyltransferase (217 aa).

The S-adenosyl-L-methionine site is built by Glu44, Glu69, Asp96, and Asp118. The active site involves Asp118. Substrate contacts are provided by residues Lys122, Asp154, and 191-194 (TEYE).

Belongs to the class I-like SAM-binding methyltransferase superfamily. TrmB family.

It carries out the reaction guanosine(46) in tRNA + S-adenosyl-L-methionine = N(7)-methylguanosine(46) in tRNA + S-adenosyl-L-homocysteine. Its pathway is tRNA modification; N(7)-methylguanine-tRNA biosynthesis. Catalyzes the formation of N(7)-methylguanine at position 46 (m7G46) in tRNA. The sequence is that of tRNA (guanine-N(7)-)-methyltransferase from Bacillus cereus (strain G9842).